Reading from the N-terminus, the 539-residue chain is T-complex protein 1 subunit zeta (539 aa).

It belongs to the TCP-1 chaperonin family. As to quaternary structure, heterooligomeric complex of about 850 to 900 kDa that forms two stacked rings, 12 to 16 nm in diameter.

The protein localises to the cytoplasm. Its function is as follows. Molecular chaperone; assists the folding of proteins upon ATP hydrolysis. Known to play a role, in vitro, in the folding of actin and tubulin. The sequence is that of T-complex protein 1 subunit zeta (cct-6) from Caenorhabditis elegans.